Reading from the N-terminus, the 423-residue chain is Progestin and adipoQ receptor-like protein 1 (423 aa).

Residues 1 to 201 are Cytoplasmic-facing; sequence MDPDEVNQAL…KSIWSLHTET (201 aa). The disordered stretch occupies residues 54-140; that stretch reads VVSPTNSDDE…DEDELEVDVK (87 aa). The span at 60–69 shows a compositional bias: acidic residues; it reads SDDEEGEFCS. Over residues 104–114 the composition is skewed to basic residues; the sequence is TVLRYRRKKGG. A helical transmembrane segment spans residues 202–222; it reads GNIWTHLIGCVAFFLLACWFL. Topologically, residues 223 to 234 are extracellular; sequence TRPDNHIQFQEK. The helical transmembrane segment at 235 to 252 threads the bilayer; it reads VVFSFFFAGAVSVSDSRS. Over 253-288 the chain is Cytoplasmic; the sequence is PSTPSRVIRSTSSRYSANSTIWESRCSLSARLFQPK. Residues 289 to 309 traverse the membrane as a helical segment; it reads ITYIAMVCVLGIGAIVVSLWD. Residues 310-320 lie on the Extracellular side of the membrane; sequence KFSESKYRPVR. Residues 321–341 traverse the membrane as a helical segment; sequence AAVFVGMGCSGVIPTIHYIIT. Over 342 to 351 the chain is Cytoplasmic; the sequence is DGVHSLFADN. The helical transmembrane segment at 352–372 threads the bilayer; sequence SFHWLLLMAFLYLLGAALYAT. The Extracellular portion of the chain corresponds to 373–392; it reads RTPERFFPGKCDIWFQSHQL. The chain crosses the membrane as a helical span at residues 393–413; sequence FHTCVVIAAFVHYYGISEMAF. The Cytoplasmic segment spans residues 414-423; sequence ARLNEQCPVR.

This sequence belongs to the ADIPOR family.

It localises to the membrane. Its function is as follows. Probable receptor, which may be involved in metabolic pathways that regulate lipid metabolism such as fatty acid oxidation. This chain is Progestin and adipoQ receptor-like protein 1, found in Caenorhabditis briggsae.